The chain runs to 457 residues: Argininosuccinate lyase (457 aa).

This sequence belongs to the lyase 1 family. Argininosuccinate lyase subfamily.

Its subcellular location is the cytoplasm. The enzyme catalyses 2-(N(omega)-L-arginino)succinate = fumarate + L-arginine. Its pathway is amino-acid biosynthesis; L-arginine biosynthesis; L-arginine from L-ornithine and carbamoyl phosphate: step 3/3. The polypeptide is Argininosuccinate lyase (Klebsiella pneumoniae (strain 342)).